The sequence spans 747 residues: AMP deaminase 1 (747 aa).

T81 bears the Phosphothreonine mark. S85 carries the post-translational modification Phosphoserine. Y216 is subject to Phosphotyrosine. Residues H303 and H305 each coordinate Zn(2+). Substrate contacts are provided by residues H305 and 374–379 (KFNDKY). A Phosphoserine modification is found at S441. H572 contacts Zn(2+). A substrate-binding site is contributed by E575. The Proton acceptor role is filled by H594. Zn(2+) is bound at residue D649. 650–653 (DPMQ) is a substrate binding site.

This sequence belongs to the metallo-dependent hydrolases superfamily. Adenosine and AMP deaminases family. In terms of assembly, homotetramer. Zn(2+) is required as a cofactor.

It catalyses the reaction AMP + H2O + H(+) = IMP + NH4(+). It participates in purine metabolism; IMP biosynthesis via salvage pathway; IMP from AMP: step 1/1. In terms of biological role, AMP deaminase plays a critical role in energy metabolism. The chain is AMP deaminase 1 from Homo sapiens (Human).